A 311-amino-acid chain; its full sequence is tRNA-cytidine(32) 2-sulfurtransferase (311 aa).

A PP-loop motif motif is present at residues 47–52 (SGGKDS). [4Fe-4S] cluster is bound by residues C122, C125, and C213.

It belongs to the TtcA family. Homodimer. Mg(2+) serves as cofactor. The cofactor is [4Fe-4S] cluster.

Its subcellular location is the cytoplasm. It carries out the reaction cytidine(32) in tRNA + S-sulfanyl-L-cysteinyl-[cysteine desulfurase] + AH2 + ATP = 2-thiocytidine(32) in tRNA + L-cysteinyl-[cysteine desulfurase] + A + AMP + diphosphate + H(+). It functions in the pathway tRNA modification. In terms of biological role, catalyzes the ATP-dependent 2-thiolation of cytidine in position 32 of tRNA, to form 2-thiocytidine (s(2)C32). The sulfur atoms are provided by the cysteine/cysteine desulfurase (IscS) system. The sequence is that of tRNA-cytidine(32) 2-sulfurtransferase from Salmonella typhi.